Consider the following 302-residue polypeptide: UDP-3-O-acyl-N-acetylglucosamine deacetylase (302 aa).

H82, H238, and D242 together coordinate Zn(2+). H265 serves as the catalytic Proton donor.

It belongs to the LpxC family. It depends on Zn(2+) as a cofactor.

It carries out the reaction a UDP-3-O-[(3R)-3-hydroxyacyl]-N-acetyl-alpha-D-glucosamine + H2O = a UDP-3-O-[(3R)-3-hydroxyacyl]-alpha-D-glucosamine + acetate. It functions in the pathway glycolipid biosynthesis; lipid IV(A) biosynthesis; lipid IV(A) from (3R)-3-hydroxytetradecanoyl-[acyl-carrier-protein] and UDP-N-acetyl-alpha-D-glucosamine: step 2/6. Catalyzes the hydrolysis of UDP-3-O-myristoyl-N-acetylglucosamine to form UDP-3-O-myristoylglucosamine and acetate, the committed step in lipid A biosynthesis. The protein is UDP-3-O-acyl-N-acetylglucosamine deacetylase of Leptospira biflexa serovar Patoc (strain Patoc 1 / Ames).